The sequence spans 500 residues: Na(+)/H(+) antiporter NhaB (500 aa).

A run of 12 helical transmembrane segments spans residues 28–50 (FLLL…VLVG), 68–88 (GGLL…ALYA), 98–118 (LLLM…LLLF), 121–141 (LLLG…LAAL), 145–165 (FLDA…FFAV), 205–225 (LLMH…VGEP), 244–264 (QVAP…VLLE), 311–331 (VLIV…LLVI), 350–370 (FQEA…VAVI), 394–414 (MLFI…VATI), 449–469 (VATP…IAPL), and 477–497 (MVWM…WAVS).

This sequence belongs to the NhaB Na(+)/H(+) (TC 2.A.34) antiporter family.

The protein localises to the cell inner membrane. It catalyses the reaction 2 Na(+)(in) + 3 H(+)(out) = 2 Na(+)(out) + 3 H(+)(in). Its function is as follows. Na(+)/H(+) antiporter that extrudes sodium in exchange for external protons. This chain is Na(+)/H(+) antiporter NhaB, found in Pseudomonas aeruginosa (strain LESB58).